Here is a 216-residue protein sequence, read N- to C-terminus: MPIFRNARFEVSIAKSGALPPPEGAEIAFAGRSNAGKSSAINTLADHTRLAFVSKTPGRTQLINFFRLDCGAVLVDLPGYGYAKVPENIRRQWQGLLEHYLRKRENLIGLVLIMDSRHPLTPLDRQMIDWFVPGGRPIHVLLTKCDKLSRNEAAATLASVRREVAALGPQISVQLFSSLKKIGMEEVEHKVAGWLGLPSDDLPAIPTPAQLRAAGK.

The EngB-type G domain maps to 23–197 (EGAEIAFAGR…EHKVAGWLGL (175 aa)). Residues 31–38 (GRSNAGKS), 58–62 (GRTQL), 76–79 (DLPG), 143–146 (TKCD), and 176–178 (FSS) each bind GTP. 2 residues coordinate Mg(2+): S38 and T60.

The protein belongs to the TRAFAC class TrmE-Era-EngA-EngB-Septin-like GTPase superfamily. EngB GTPase family. Mg(2+) is required as a cofactor.

Necessary for normal cell division and for the maintenance of normal septation. The polypeptide is Probable GTP-binding protein EngB (Aromatoleum aromaticum (strain DSM 19018 / LMG 30748 / EbN1) (Azoarcus sp. (strain EbN1))).